A 370-amino-acid polypeptide reads, in one-letter code: MSEQNRLLLIGGDGVGAEVVHEAGRIAQWFAARRGLPLSIGQAAFGVEVLNRTGRIMTDDTLAQIRAADAVLFGAIGGPEYDRLPLEQVREEGLLRIRRELGLYANLRPVRYWPALAELCPFVPERVEKVDMMIVRELAGGIYYASPRGIDQTGDGRRVGTNTQRYDDLEIRRIARVAFELARARGGRVCSVDKSNVLESGLLWREEVQACRDAEYPDVELEHILVDNCALQLCLRPARFDVLLADNLFGDILSDAAGAVAGSLGMLPSASFGAEDGGRRRGFYEPVHGSAPDIAGQGIANPLGAILSLALALRWTFRQPAEADLLERAVERALAGGARTLDLLAGAAAPALSTRAMADAVLQALETLAA.

Residues arginine 98, arginine 108, arginine 136, and aspartate 227 each coordinate substrate. Aspartate 227, aspartate 251, and aspartate 255 together coordinate Mg(2+). 289–301 (GSAPDIAGQGIAN) contributes to the NAD(+) binding site.

Belongs to the isocitrate and isopropylmalate dehydrogenases family. LeuB type 1 subfamily. Homodimer. Requires Mg(2+) as cofactor. Mn(2+) serves as cofactor.

Its subcellular location is the cytoplasm. It catalyses the reaction (2R,3S)-3-isopropylmalate + NAD(+) = 4-methyl-2-oxopentanoate + CO2 + NADH. It functions in the pathway amino-acid biosynthesis; L-leucine biosynthesis; L-leucine from 3-methyl-2-oxobutanoate: step 3/4. Functionally, catalyzes the oxidation of 3-carboxy-2-hydroxy-4-methylpentanoate (3-isopropylmalate) to 3-carboxy-4-methyl-2-oxopentanoate. The product decarboxylates to 4-methyl-2 oxopentanoate. This is 3-isopropylmalate dehydrogenase 1 from Bordetella bronchiseptica (strain ATCC BAA-588 / NCTC 13252 / RB50) (Alcaligenes bronchisepticus).